A 161-amino-acid chain; its full sequence is Nucleotide-binding protein Bcep18194_A5887 (161 aa).

The protein belongs to the YajQ family.

In terms of biological role, nucleotide-binding protein. The protein is Nucleotide-binding protein Bcep18194_A5887 of Burkholderia lata (strain ATCC 17760 / DSM 23089 / LMG 22485 / NCIMB 9086 / R18194 / 383).